We begin with the raw amino-acid sequence, 291 residues long: Elongation factor Ts (291 aa).

An involved in Mg(2+) ion dislocation from EF-Tu region spans residues 79–82; sequence TDFV.

The protein belongs to the EF-Ts family.

Its subcellular location is the cytoplasm. In terms of biological role, associates with the EF-Tu.GDP complex and induces the exchange of GDP to GTP. It remains bound to the aminoacyl-tRNA.EF-Tu.GTP complex up to the GTP hydrolysis stage on the ribosome. In Ruegeria pomeroyi (strain ATCC 700808 / DSM 15171 / DSS-3) (Silicibacter pomeroyi), this protein is Elongation factor Ts.